The primary structure comprises 361 residues: MTDKIKVGLIFGGNSSEYEVSIMSAHNIYEEIDTNKFDVYPMWITNDGYLADDADSRKVLDNPKMEVANPHKVANISNIIELKDRPEIDVFFPIVHGNLGEDGCLQGLFRVLDKPFVGDDVLAAAVTMDKEMTKILAQRAGVPVAKWIAVKRFEYNDPDNEKLDYEYVASQLGSDLFVKPSNQGSSVGVSHVTNEKEYKVALAEAFKYDDKVLVEETVHGTEVETAVLGNDKPIVAGVGQIINAKDSFYTYENKYDDDSTSTLEIPAKLPEGIVETVRKNALKVFQATECSGLARIDSMLRSEDNEVVLTEVNALPGFTNISMYPKLFEEIGIPYTDLITKLIDYAMERYDHKKTLLHKHD.

An ATP-grasp domain is found at 134-344 (KILAQRAGVP…YTDLITKLID (211 aa)). An ATP-binding site is contributed by 169–224 (ASQLGSDLFVKPSNQGSSVGVSHVTNEKEYKVALAEAFKYDDKVLVEETVHGTEVE). Asp-297, Glu-311, and Asn-313 together coordinate Mg(2+).

This sequence belongs to the D-alanine--D-alanine ligase family. Requires Mg(2+) as cofactor. Mn(2+) serves as cofactor.

The protein localises to the cytoplasm. The catalysed reaction is 2 D-alanine + ATP = D-alanyl-D-alanine + ADP + phosphate + H(+). It functions in the pathway cell wall biogenesis; peptidoglycan biosynthesis. In terms of biological role, cell wall formation. This chain is D-alanine--D-alanine ligase, found in Lactobacillus johnsonii (strain CNCM I-12250 / La1 / NCC 533).